The following is a 504-amino-acid chain: Anaerobic nitric oxide reductase transcription regulator NorR (504 aa).

A 4-aspartylphosphate modification is found at Asp57. The Sigma-54 factor interaction domain maps to 187 to 416; that stretch reads MIGLSPGMTQ…LEHAIHRAVV (230 aa). ATP is bound by residues 215–222 and 278–287; these read GETGTGKE and ADNGTLFLDE. Residues 479–498 constitute a DNA-binding region (H-T-H motif); that stretch reads WAACARMLETDVANLHRLAK.

The protein operates within nitrogen metabolism; nitric oxide reduction. Functionally, required for the expression of anaerobic nitric oxide (NO) reductase, acts as a transcriptional activator for at least the norVW operon. Activation also requires sigma-54. This Escherichia coli O45:K1 (strain S88 / ExPEC) protein is Anaerobic nitric oxide reductase transcription regulator NorR.